We begin with the raw amino-acid sequence, 240 residues long: RxLR effector protein PexRD20 (240 aa).

A signal peptide spans 1–23; the sequence is MRCHYFVLLAVAAFLAGANVAVA. Positions 43-58 match the RxLR-dEER motif; that stretch reads RALRSHTKATDHGEER.

Belongs to the RxLR effector family.

The protein resides in the secreted. It is found in the host cytoplasm. The protein localises to the host nucleus. It localises to the host nucleolus. Its function is as follows. Effector that enhances P.infestans colonization of Nicotiana benthamiana leaves. This is RxLR effector protein PexRD20 from Phytophthora infestans (strain T30-4) (Potato late blight agent).